A 757-amino-acid polypeptide reads, in one-letter code: RNA-directed RNA polymerase catalytic subunit (757 aa).

Residues 53–82 (GRWTTNTETGAPQLNPIDGPLPEDNEPSGY) form a disordered region. Residues 55–64 (WTTNTETGAP) show a composition bias toward polar residues. 2 short sequence motifs (nuclear localization signal) span residues 187–195 (RKRRVRDNM) and 203–216 (RTIG…NKRS). Residues 249–256 (RGFVYFVE) form a promoter-binding site region. The RdRp catalytic domain maps to 286–483 (VRKMMTNSQD…GINMSKKKSY (198 aa)). The segment at 493 to 757 (TSFFYRYGFV…STIEELRRQK (265 aa)) is required for interaction with human PKP2.

Belongs to the influenza viruses polymerase PB1 family. As to quaternary structure, influenza RNA polymerase is composed of three subunits: PB1, PB2 and PA. Interacts (via N-terminus) with PA (via C-terminus). Interacts (via C-terminus) with PB2 (via N-terminus); this interaction is essential for transcription initiation. Interacts (via C-terminus) with human PKP2 (via N-terminus); the interaction competitively inhibits the interaction between the RNA polymerase subunits PB1 and PB2. In terms of processing, phosphorylated by host PRKCA.

Its subcellular location is the host nucleus. It localises to the host cytoplasm. It carries out the reaction RNA(n) + a ribonucleoside 5'-triphosphate = RNA(n+1) + diphosphate. In terms of biological role, RNA-dependent RNA polymerase which is responsible for replication and transcription of virus RNA segments. The transcription of viral mRNAs occurs by a unique mechanism called cap-snatching. 5' methylated caps of cellular mRNAs are cleaved after 10-13 nucleotides by PA. In turn, these short capped RNAs are used as primers by PB1 for transcription of viral mRNAs. During virus replication, PB1 initiates RNA synthesis and copy vRNA into complementary RNA (cRNA) which in turn serves as a template for the production of more vRNAs. The sequence is that of RNA-directed RNA polymerase catalytic subunit from Aves (Human).